The chain runs to 487 residues: MTTHYIAGQWLAGQGEALQSLNPVTQAVVWTGQGADAGQVEAAVQAARQAFPGWASLSLEARIGVLEAFAGKLKARAEELAHCIGEETGKPLWESATEVTSMVNKVAISVQSYRERTGEKSGPLADATAVLRHKPHGVVAVFGPYNFPGHLPNGHIVPALLAGNCVVFKPSELTPKVAELTVQCWVEAGLPAGVLNLVQGARETGVALAANPGIDGLFFTGSSRTGNLLHQQFAGRPDKILALEMGGNNPLVVDEVKDLDAAVYTIIQSAFISAGQRCTCARRLLVPQGAWGDSLIQRLVDVSRSISVGAFDQQPAPFMGSVISLQAARALLAAQAELLGKGAVALLEMTQPQADAALLTPGIIDVTAVAGRPDEEFFGPLLQVIRYADFDAAIEEANNTQYGLAAGLLSDSNARYQHFWLRSRAGIVNWNKQLTGAASSAPFGGVGASGNHRASAYYAADYCAYPVASLETASLALPATLTPGVTL.

221-226 (GSSRTG) is an NAD(+) binding site. Active-site residues include glutamate 244 and cysteine 278.

Belongs to the aldehyde dehydrogenase family. AstD subfamily.

It carries out the reaction N-succinyl-L-glutamate 5-semialdehyde + NAD(+) + H2O = N-succinyl-L-glutamate + NADH + 2 H(+). It participates in amino-acid degradation; L-arginine degradation via AST pathway; L-glutamate and succinate from L-arginine: step 4/5. Functionally, catalyzes the NAD-dependent reduction of succinylglutamate semialdehyde into succinylglutamate. In Pseudomonas entomophila (strain L48), this protein is N-succinylglutamate 5-semialdehyde dehydrogenase.